The sequence spans 261 residues: Cytochrome c oxidase subunit 3 (261 aa).

Topologically, residues 1 to 15 (MTHQTHAYHMVNPSP) are mitochondrial matrix. The chain crosses the membrane as a helical span at residues 16–34 (WPLTGALSALLMTSGLAMW). Residues 35–40 (FHFNST) lie on the Mitochondrial intermembrane side of the membrane. The chain crosses the membrane as a helical span at residues 41–66 (LLLAMGLLTNILTMYQWWRDIIREST). Residues 67–72 (FQGHHT) are Mitochondrial matrix-facing. A helical transmembrane segment spans residues 73 to 105 (SIVQKGLRYGMILFIISEVFFFSGFFWAFYHSS). The Mitochondrial intermembrane segment spans residues 106–128 (LAPTPELGGCWPPTGIHPLNPLE). The helical transmembrane segment at 129-152 (VPLLNTSVLLASGVSITWAHHSLM) threads the bilayer. Over 153 to 155 (EGN) the chain is Mitochondrial matrix. The helical transmembrane segment at 156-183 (RKNMLQGLFITISLGVYFTLLQASEYYE) threads the bilayer. Residues 184-190 (ASFTISD) are Mitochondrial intermembrane-facing. A helical membrane pass occupies residues 191-223 (GVYGSTFFVATGFHGLHVIIGSTFLIVCFLRQL). Residues 224-232 (KFHFTSSHH) lie on the Mitochondrial matrix side of the membrane. Residues 233-256 (FGFEAAAWYWHFVDVVWLFLYVSI) form a helical membrane-spanning segment. Over 257-261 (YWWGS) the chain is Mitochondrial intermembrane.

Belongs to the cytochrome c oxidase subunit 3 family. In terms of assembly, component of the cytochrome c oxidase (complex IV, CIV), a multisubunit enzyme composed of 14 subunits. The complex is composed of a catalytic core of 3 subunits MT-CO1, MT-CO2 and MT-CO3, encoded in the mitochondrial DNA, and 11 supernumerary subunits COX4I, COX5A, COX5B, COX6A, COX6B, COX6C, COX7A, COX7B, COX7C, COX8 and NDUFA4, which are encoded in the nuclear genome. The complex exists as a monomer or a dimer and forms supercomplexes (SCs) in the inner mitochondrial membrane with NADH-ubiquinone oxidoreductase (complex I, CI) and ubiquinol-cytochrome c oxidoreductase (cytochrome b-c1 complex, complex III, CIII), resulting in different assemblies (supercomplex SCI(1)III(2)IV(1) and megacomplex MCI(2)III(2)IV(2)).

The protein localises to the mitochondrion inner membrane. The catalysed reaction is 4 Fe(II)-[cytochrome c] + O2 + 8 H(+)(in) = 4 Fe(III)-[cytochrome c] + 2 H2O + 4 H(+)(out). Its function is as follows. Component of the cytochrome c oxidase, the last enzyme in the mitochondrial electron transport chain which drives oxidative phosphorylation. The respiratory chain contains 3 multisubunit complexes succinate dehydrogenase (complex II, CII), ubiquinol-cytochrome c oxidoreductase (cytochrome b-c1 complex, complex III, CIII) and cytochrome c oxidase (complex IV, CIV), that cooperate to transfer electrons derived from NADH and succinate to molecular oxygen, creating an electrochemical gradient over the inner membrane that drives transmembrane transport and the ATP synthase. Cytochrome c oxidase is the component of the respiratory chain that catalyzes the reduction of oxygen to water. Electrons originating from reduced cytochrome c in the intermembrane space (IMS) are transferred via the dinuclear copper A center (CU(A)) of subunit 2 and heme A of subunit 1 to the active site in subunit 1, a binuclear center (BNC) formed by heme A3 and copper B (CU(B)). The BNC reduces molecular oxygen to 2 water molecules using 4 electrons from cytochrome c in the IMS and 4 protons from the mitochondrial matrix. This is Cytochrome c oxidase subunit 3 (MT-CO3) from Equus caballus (Horse).